The following is a 184-amino-acid chain: Acyl-homoserine-lactone synthase (184 aa).

It belongs to the autoinducer synthase family.

The enzyme catalyses a fatty acyl-[ACP] + S-adenosyl-L-methionine = an N-acyl-L-homoserine lactone + S-methyl-5'-thioadenosine + holo-[ACP] + H(+). Involved in the synthesis of the acyl-homoserine lactone (AHL) signal N-(3-hydroxydodecanoyl)-L-HSL (3-hydroxy-C(12)-HSL or OH-dDHL). Required for normal biofilm development. The sequence is that of Acyl-homoserine-lactone synthase from Acinetobacter baumannii.